The chain runs to 166 residues: Cyclic pyranopterin monophosphate synthase (166 aa).

Residues Leu83–His85 and Met121–Glu122 each bind substrate. Residue Asp136 is part of the active site.

Belongs to the MoaC family. As to quaternary structure, homohexamer; trimer of dimers.

The catalysed reaction is (8S)-3',8-cyclo-7,8-dihydroguanosine 5'-triphosphate = cyclic pyranopterin phosphate + diphosphate. The protein operates within cofactor biosynthesis; molybdopterin biosynthesis. Catalyzes the conversion of (8S)-3',8-cyclo-7,8-dihydroguanosine 5'-triphosphate to cyclic pyranopterin monophosphate (cPMP). This chain is Cyclic pyranopterin monophosphate synthase, found in Syntrophobacter fumaroxidans (strain DSM 10017 / MPOB).